A 131-amino-acid polypeptide reads, in one-letter code: Small ribosomal subunit protein uS8 (131 aa).

Belongs to the universal ribosomal protein uS8 family. As to quaternary structure, part of the 30S ribosomal subunit. Contacts proteins S5 and S12.

Functionally, one of the primary rRNA binding proteins, it binds directly to 16S rRNA central domain where it helps coordinate assembly of the platform of the 30S subunit. In Prosthecochloris aestuarii (strain DSM 271 / SK 413), this protein is Small ribosomal subunit protein uS8.